Reading from the N-terminus, the 609-residue chain is Arginine--tRNA ligase (609 aa).

The short motif at 132–142 (ANPTSSLHVGH) is the 'HIGH' region element.

The protein belongs to the class-I aminoacyl-tRNA synthetase family. Monomer.

The protein localises to the cytoplasm. The enzyme catalyses tRNA(Arg) + L-arginine + ATP = L-arginyl-tRNA(Arg) + AMP + diphosphate. The sequence is that of Arginine--tRNA ligase from Psychrobacter arcticus (strain DSM 17307 / VKM B-2377 / 273-4).